Here is a 630-residue protein sequence, read N- to C-terminus: Differentially expressed in FDCP 6 (630 aa).

Y210 carries the phosphotyrosine modification. The region spanning 216 to 312 (DVLKQGYLWK…WTAAIQTAIR (97 aa)) is the PH domain. K225 bears the N6-acetyllysine mark. Disordered regions lie at residues 318 to 341 (KTSLHKDLKQKRREQREQRERRRA), 378 to 418 (LQEE…ELKK), and 552 to 630 (HPIE…APGN). 2 stretches are compositionally biased toward basic and acidic residues: residues 331–341 (EQREQRERRRA) and 378–392 (LQEEEERRRSQHKEL). Residues 588-606 (WGSQGNRTLSVNSSEQKSL) show a composition bias toward polar residues. S590 bears the Phosphoserine mark. Residues 620 to 630 (QEEKLDPAPGN) are compositionally biased toward basic and acidic residues.

Interacts with IRF4, activated RAC1 and F-actin. Both the phosphorylated and non-phosphorylated forms bind phosphatidylinositol 3,4,5-trisphosphate (PtdInsP3). Interacts with ZAP70. Interacts with RAB11A. Post-translationally, tyrosine-phosphorylated by tyrosine-protein kinase LCK in response to T-cell activation. As to expression, thymus.

Its subcellular location is the cytoplasm. It is found in the cell membrane. The protein localises to the nucleus. It localises to the cytoskeleton. The protein resides in the perinuclear region. Its subcellular location is the cell projection. It is found in the filopodium. Phosphatidylinositol 3,4,5-trisphosphate-dependent guanine nucleotide exchange factor (GEF) which plays a role in the activation of Rho GTPases RAC1, RhoA and CDC42. Can regulate cell morphology in cooperation with activated RAC1. Involved in immune homeostasis by ensuring proper trafficking and availability of T-cell regulator CTLA-4 at T-cell surface. Plays a role in Th2 (T helper cells) development and/or activation, perhaps by interfering with ZAP70 signaling. Required for optimal T-cell effector function, lymphocyte homeostasis and the prevention of systemic autoimmunity. This chain is Differentially expressed in FDCP 6 (Def6), found in Mus musculus (Mouse).